The chain runs to 209 residues: Imidazole glycerol phosphate synthase subunit HisH (209 aa).

Residues 1 to 205 (MIAIIDYGMG…QGVVEAWKSS (205 aa)) form the Glutamine amidotransferase type-1 domain. The active-site Nucleophile is Cys-79. Catalysis depends on residues His-180 and Glu-182.

Heterodimer of HisH and HisF.

It is found in the cytoplasm. It carries out the reaction 5-[(5-phospho-1-deoxy-D-ribulos-1-ylimino)methylamino]-1-(5-phospho-beta-D-ribosyl)imidazole-4-carboxamide + L-glutamine = D-erythro-1-(imidazol-4-yl)glycerol 3-phosphate + 5-amino-1-(5-phospho-beta-D-ribosyl)imidazole-4-carboxamide + L-glutamate + H(+). The catalysed reaction is L-glutamine + H2O = L-glutamate + NH4(+). Its pathway is amino-acid biosynthesis; L-histidine biosynthesis; L-histidine from 5-phospho-alpha-D-ribose 1-diphosphate: step 5/9. Functionally, IGPS catalyzes the conversion of PRFAR and glutamine to IGP, AICAR and glutamate. The HisH subunit catalyzes the hydrolysis of glutamine to glutamate and ammonia as part of the synthesis of IGP and AICAR. The resulting ammonia molecule is channeled to the active site of HisF. This is Imidazole glycerol phosphate synthase subunit HisH from Bacillus cereus (strain ATCC 14579 / DSM 31 / CCUG 7414 / JCM 2152 / NBRC 15305 / NCIMB 9373 / NCTC 2599 / NRRL B-3711).